Here is a 2346-residue protein sequence, read N- to C-terminus: Acetyl-CoA carboxylase 1 (2346 aa).

Methionine 1 carries the post-translational modification N-acetylmethionine. 8 positions are modified to phosphoserine: serine 5, serine 23, serine 25, serine 29, serine 34, serine 48, serine 50, and serine 53. Position 58 is a phosphothreonine (threonine 58). Residues serine 78 and serine 80 each carry the phosphoserine modification. Residues 117–618 enclose the Biotin carboxylation domain; the sequence is VIEKVLIANN…DTGWLDRLIA (502 aa). Positions 275–466 constitute an ATP-grasp domain; the sequence is SKRILNVPQE…LPAAQLQIAM (192 aa). Residue 315 to 320 coordinates ATP; that stretch reads GGGGKG. Residues glutamate 424, glutamate 437, and asparagine 439 each contribute to the Mg(2+) site. Glutamate 424, glutamate 437, and asparagine 439 together coordinate Mn(2+). The active site involves arginine 441. Residue serine 488 is modified to Phosphoserine. At threonine 610 the chain carries Phosphothreonine. A Biotinyl-binding domain is found at 745 to 819; it reads FEKENDPSVM…DPGCVLAKMQ (75 aa). An N6-biotinyllysine modification is found at lysine 786. Residues serine 835, serine 1201, serine 1216, and serine 1218 each carry the phosphoserine modification. Threonine 1227 carries the phosphothreonine modification. 3 positions are modified to phosphoserine: serine 1259, serine 1263, and serine 1273. Residue lysine 1334 is modified to N6-acetyllysine. One can recognise a CoA carboxyltransferase N-terminal domain in the interval 1576 to 1914; the sequence is PYVTKDLLQS…SVHSSVPLLN (339 aa). A carboxyltransferase region spans residues 1576–2234; it reads PYVTKDLLQS…EDLVKKKIHN (659 aa). The CoA site is built by arginine 1823, lysine 2127, and arginine 2129. One can recognise a CoA carboxyltransferase C-terminal domain in the interval 1918 to 2234; sequence PIDRIIEFVP…EDLVKKKIHN (317 aa). Threonine 2153 bears the Phosphothreonine mark.

In terms of assembly, monomer, homodimer, and homotetramer. Can form filamentous polymers. Interacts in its inactive phosphorylated form with the BRCT domains of BRCA1 which prevents ACACA dephosphorylation and inhibits lipid synthesis. Interacts with MID1IP1; interaction with MID1IP1 promotes oligomerization and increases its activity. Mg(2+) is required as a cofactor. Requires Mn(2+) as cofactor. Biotin serves as cofactor. In terms of processing, phosphorylation on Ser-1263 is required for interaction with BRCA1. Post-translationally, phosphorylation at Ser-80 by AMPK inactivates enzyme activity. The biotin cofactor is covalently attached to the central biotinyl-binding domain and is required for the catalytic activity. As to expression, expressed in brain, placenta, skeletal muscle, renal, pancreatic and adipose tissues; expressed at low level in pulmonary tissue; not detected in the liver.

The protein localises to the cytoplasm. Its subcellular location is the cytosol. The enzyme catalyses hydrogencarbonate + acetyl-CoA + ATP = malonyl-CoA + ADP + phosphate + H(+). Its pathway is lipid metabolism; malonyl-CoA biosynthesis; malonyl-CoA from acetyl-CoA: step 1/1. Its activity is regulated as follows. Inhibited by phosphorylation. Citrate promotes oligomerization of the protein into filaments that correspond to the most active form of the carboxylase. Inhibited by palmitoyl-CoA. Its function is as follows. Cytosolic enzyme that catalyzes the carboxylation of acetyl-CoA to malonyl-CoA, the first and rate-limiting step of de novo fatty acid biosynthesis. This is a 2 steps reaction starting with the ATP-dependent carboxylation of the biotin carried by the biotin carboxyl carrier (BCC) domain followed by the transfer of the carboxyl group from carboxylated biotin to acetyl-CoA. The chain is Acetyl-CoA carboxylase 1 from Homo sapiens (Human).